We begin with the raw amino-acid sequence, 173 residues long: CASP-like protein 2D1 (173 aa).

The Cytoplasmic segment spans residues Met1–Asp9. Residues Ser10–Thr29 form a helical membrane-spanning segment. The Extracellular portion of the chain corresponds to Asn30 to Tyr50. Asn34 carries an N-linked (GlcNAc...) asparagine glycan. The chain crosses the membrane as a helical span at residues Met51–Ile71. Topologically, residues Lys72–Gln86 are cytoplasmic. A helical transmembrane segment spans residues Ile87–Tyr107. Topologically, residues Asn108–Thr131 are extracellular. A helical membrane pass occupies residues Ala132–Tyr152. Residues Arg153–Thr173 are Cytoplasmic-facing.

Belongs to the Casparian strip membrane proteins (CASP) family. In terms of assembly, homodimer and heterodimers.

It localises to the cell membrane. The sequence is that of CASP-like protein 2D1 from Ricinus communis (Castor bean).